Here is a 570-residue protein sequence, read N- to C-terminus: Peptidyl-prolyl cis-trans isomerase FKBP9 (570 aa).

Residues 1–24 form the signal peptide; sequence MAFRGWRPPPPPLLLLLLWVTGQA. 4 consecutive PPIase FKBP-type domains span residues 54–142, 166–254, 278–365, and 389–477; these read GDFV…MDIW, SDFV…LDLH, GDFL…IDFH, and GDYL…LELV. N-linked (GlcNAc...) asparagine glycans are attached at residues Asn174, Asn286, Asn302, and Asn397. EF-hand domains lie at 488–523 and 533–568; these read WNGE…QVAS and DAEL…AKHD. Ca(2+)-binding residues include Asp501, Asp503, Asn505, Glu507, Glu512, Asp546, Asn548, Asp550, Lys552, and Glu557. The short motif at 567–570 is the Prevents secretion from ER element; that stretch reads HDEL.

In terms of processing, phosphorylated.

It is found in the endoplasmic reticulum. It catalyses the reaction [protein]-peptidylproline (omega=180) = [protein]-peptidylproline (omega=0). With respect to regulation, inhibited by FK506. PPIases accelerate the folding of proteins during protein synthesis. This Homo sapiens (Human) protein is Peptidyl-prolyl cis-trans isomerase FKBP9 (FKBP9).